We begin with the raw amino-acid sequence, 1281 residues long: Enterobactin synthase component F (1281 aa).

The segment at 1 to 301 (MSQHLPLVAA…NVLPLGIHIA (301 aa)) is elongation/condensation. An adenylation region spans residues 486–891 (SYREMHEQVV…ALPDVKQAVT (406 aa)). The Carrier domain maps to 975–1050 (APKAGSETII…KLATIIDGEE (76 aa)). Residue S1010 is modified to O-(pantetheine 4'-phosphoryl)serine. The interval 1070 to 1281 (PTLFCFHPAS…GPIIRATLNR (212 aa)) is thioesterase. The active-site Proton acceptor; for thioesterase activity is H1259.

The protein belongs to the ATP-dependent AMP-binding enzyme family. EntF subfamily. In terms of assembly, proteins EntB, EntD, EntE and EntF are the component of the enterobactin synthase. Components probably do not form a stable complex. EntF acts as a catalytic monomer. It depends on pantetheine 4'-phosphate as a cofactor. In terms of processing, 4'-phosphopantetheine is transferred from CoA to a specific serine of apo-EntF by EntD. Holo-EntF so formed is then acylated with seryl-AMP.

It localises to the cytoplasm. The enzyme catalyses 3 2,3-dihydroxybenzoate + 3 L-serine + 6 ATP = enterobactin + 6 AMP + 6 diphosphate + 4 H(+). It carries out the reaction holo-[peptidyl-carrier protein] + L-serine + ATP = L-seryl-[peptidyl-carrier protein] + AMP + diphosphate. It participates in siderophore biosynthesis; enterobactin biosynthesis. In terms of biological role, involved in the biosynthesis of the siderophore enterobactin (enterochelin), which is a macrocyclic trimeric lactone of N-(2,3-dihydroxybenzoyl)-serine. EntF catalyzes the activation of L-serine via ATP-dependent PPi exchange reaction to form seryladenylate. Activated L-serine is loaded onto the peptidyl carrier domain via a thioester linkage to the phosphopanthetheine moiety, forming seryl-S-Ppant-EntF. EntF acts then as the sole catalyst for the formation of the three amide and three ester linkages found in enterobactin, using seryladenylate and 2,3-dihydroxybenzoate-S-Ppant-EntB (DHB-S-Ppant-EntB) as substrates, via the formation of a DHB-Ser-S-Ppant-EntF intermediate. The sequence is that of Enterobactin synthase component F (entF) from Shigella flexneri.